Consider the following 1031-residue polypeptide: Exportin-T (1031 aa).

Belongs to the exportin family.

It is found in the nucleus. Its subcellular location is the cytoplasm. Functionally, tRNA nucleus export receptor which facilitates tRNA translocation across the nuclear pore complex. Involved in pre-tRNA splicing, probably by affecting the interaction of pre-tRNA with splicing endonuclease. The chain is Exportin-T (los1) from Emericella nidulans (strain FGSC A4 / ATCC 38163 / CBS 112.46 / NRRL 194 / M139) (Aspergillus nidulans).